Here is a 402-residue protein sequence, read N- to C-terminus: Phosphoglycerate kinase (402 aa).

Substrate contacts are provided by residues 29-31 (DFN), arginine 45, 69-72 (HLGR), arginine 125, and arginine 158. Residues lysine 209, glutamate 331, and 357–360 (GGDT) contribute to the ATP site.

It belongs to the phosphoglycerate kinase family.

The protein localises to the cytoplasm. The catalysed reaction is (2R)-3-phosphoglycerate + ATP = (2R)-3-phospho-glyceroyl phosphate + ADP. Its pathway is carbohydrate degradation; glycolysis; pyruvate from D-glyceraldehyde 3-phosphate: step 2/5. The polypeptide is Phosphoglycerate kinase (pgk) (Helicobacter pylori (strain ATCC 700392 / 26695) (Campylobacter pylori)).